The chain runs to 359 residues: ATP-dependent 6-phosphofructokinase 1 (359 aa).

Residues glycine 14, 78–79 (KG), and 115–118 (GDGS) contribute to the ATP site. Aspartate 116 lines the Mg(2+) pocket. Substrate contacts are provided by residues 139–141 (TID), arginine 176, 183–185 (MGR), glutamate 236, arginine 277, and 283–286 (HIQR). Aspartate 141 serves as the catalytic Proton acceptor.

The protein belongs to the phosphofructokinase type A (PFKA) family. Mixed-substrate PFK group III subfamily. In terms of assembly, homodimer or homotetramer. Mg(2+) is required as a cofactor.

It is found in the cytoplasm. It carries out the reaction beta-D-fructose 6-phosphate + ATP = beta-D-fructose 1,6-bisphosphate + ADP + H(+). Its pathway is carbohydrate degradation; glycolysis; D-glyceraldehyde 3-phosphate and glycerone phosphate from D-glucose: step 3/4. Its function is as follows. Catalyzes the phosphorylation of D-fructose 6-phosphate to fructose 1,6-bisphosphate by ATP, the first committing step of glycolysis. This is ATP-dependent 6-phosphofructokinase 1 from Nostoc sp. (strain PCC 7120 / SAG 25.82 / UTEX 2576).